The chain runs to 197 residues: UPF0314 protein R03235 (197 aa).

2 consecutive transmembrane segments (helical) span residues 16 to 36 (ALWL…QHLM) and 152 to 172 (LPVA…GYMV).

It belongs to the UPF0314 family.

It localises to the cell membrane. The chain is UPF0314 protein R03235 from Rhizobium meliloti (strain 1021) (Ensifer meliloti).